The following is a 130-amino-acid chain: Small ribosomal subunit protein uS11 (130 aa).

The protein belongs to the universal ribosomal protein uS11 family. In terms of assembly, part of the 30S ribosomal subunit. Interacts with proteins S7 and S18. Binds to IF-3.

In terms of biological role, located on the platform of the 30S subunit, it bridges several disparate RNA helices of the 16S rRNA. Forms part of the Shine-Dalgarno cleft in the 70S ribosome. In Prochlorococcus marinus (strain MIT 9515), this protein is Small ribosomal subunit protein uS11.